The sequence spans 155 residues: cAMP-dependent protein kinase type II-alpha regulatory subunit (155 aa).

The interval 1-34 (SGSQDLEPSSGLVTDAIADSESEDDEDLDVPIPS) is disordered. A dimerization and phosphorylation region spans residues 1–81 (SGSQDLEPSS…LQEACKDILL (81 aa)). The segment covering 18-29 (ADSESEDDEDLD) has biased composition (acidic residues). Phosphoserine occurs at positions 20 and 22. Ser-41 carries the phosphoserine; by PKA modification. 3',5'-cyclic AMP-binding positions include 82–155 (FKNL…ALMY) and Glu-150.

It belongs to the cAMP-dependent kinase regulatory chain family. In terms of assembly, the inactive form of the enzyme is composed of two regulatory chains and two catalytic chains. Activation by cAMP produces two active catalytic monomers and a regulatory dimer that binds four cAMP molecules. Interacts with AKAP4 and CBFA2T3. Interacts with the phosphorylated form of PJA2. Interacts with MYRIP; this interaction may link PKA to components of the exocytosis machinery, thus facilitating exocytosis, including insulin release. Forms a complex composed of PRKAR2A, GSK3B and GSKIP through GSKIP interaction; facilitates PKA-induced phosphorylation and regulates GSK3B activity. Interacts with ADCY8; inhibits adenylate cyclase activity through PKA phosphorylation. Phosphorylated by the activated catalytic chain. As to expression, four types of regulatory chains are found: I-alpha, I-beta, II-alpha, and II-beta. Their expression varies among tissues and is in some cases constitutive and in others inducible.

It localises to the cytoplasm. The protein resides in the cell membrane. Its function is as follows. Regulatory subunit of the cAMP-dependent protein kinases involved in cAMP signaling in cells. Type II regulatory chains mediate membrane association by binding to anchoring proteins, including the MAP2 kinase. In Sus scrofa (Pig), this protein is cAMP-dependent protein kinase type II-alpha regulatory subunit (PRKAR2A).